The following is a 455-amino-acid chain: Phosphoglucosamine mutase (455 aa).

The Phosphoserine intermediate role is filled by serine 103. Mg(2+)-binding residues include serine 103, aspartate 243, aspartate 245, and aspartate 247. At serine 103 the chain carries Phosphoserine.

The protein belongs to the phosphohexose mutase family. It depends on Mg(2+) as a cofactor. Post-translationally, activated by phosphorylation.

The catalysed reaction is alpha-D-glucosamine 1-phosphate = D-glucosamine 6-phosphate. Catalyzes the conversion of glucosamine-6-phosphate to glucosamine-1-phosphate. The protein is Phosphoglucosamine mutase of Halorhodospira halophila (strain DSM 244 / SL1) (Ectothiorhodospira halophila (strain DSM 244 / SL1)).